The sequence spans 105 residues: MAAAKIKKGDTVVVRSGKDKGRSGTVLQVLPKDEKVVVQGVNIAARHRKPSQQNPQGGIDRFEAPLHISKVSVADKDGKPTRVRFETKDGKKVRVAVKSGETIDG.

It belongs to the universal ribosomal protein uL24 family. Part of the 50S ribosomal subunit.

Functionally, one of two assembly initiator proteins, it binds directly to the 5'-end of the 23S rRNA, where it nucleates assembly of the 50S subunit. Its function is as follows. One of the proteins that surrounds the polypeptide exit tunnel on the outside of the subunit. In Novosphingobium aromaticivorans (strain ATCC 700278 / DSM 12444 / CCUG 56034 / CIP 105152 / NBRC 16084 / F199), this protein is Large ribosomal subunit protein uL24.